We begin with the raw amino-acid sequence, 39 residues long: U1-ectatotoxin-Et1b subunit A (39 aa).

A disulfide bond links Cys-14 and Cys-35.

Belongs to the ectatomin family. Ectatomin-Et subfamily. In terms of assembly, heterodimer of subunits A and B; disulfide-linked. Expressed by the venom gland.

Its subcellular location is the secreted. It localises to the target cell membrane. In Ectatomma tuberculatum (Selva ant), this protein is U1-ectatotoxin-Et1b subunit A.